Here is a 341-residue protein sequence, read N- to C-terminus: MSSITLFGAGSWGTAMSVHLASAGRDVVLWARRPEVADEIRRTSHNPTYLPELLIPSSVYITTDLEKAAEASDLWGMAVPSQQLRGRAEHLRPHAHSGVRLVALSKGIENETLLTMSQVLDDVFESVPSDQIGALYGPSHAEEVAEGRPTAVVAAAPDEGEARHIQKVFMTERLRVYMNTDVLGVEIGGSAKNVLAIAAGIADGVSYGDNAKAALVTRGLAEIRRLGQALGADPQTFAGLAGIGDLVVTCMSPHSRNRYLGEQISTGKSLDEVLNDMAMVAEGVRTTRSVYNLAKHHGVEMPITEAVHAILFDDKSPRKMVKRLMTRSAKHENWLPTTLQQ.

NADPH contacts are provided by serine 11, tryptophan 12, arginine 32, arginine 33, and lysine 106. Residues lysine 106, glycine 137, and serine 139 each contribute to the sn-glycerol 3-phosphate site. Residue alanine 141 coordinates NADPH. Positions 192, 245, 255, 256, and 257 each coordinate sn-glycerol 3-phosphate. The active-site Proton acceptor is the lysine 192. Arginine 256 serves as a coordination point for NADPH. The NADPH site is built by valine 280 and glutamate 282.

Belongs to the NAD-dependent glycerol-3-phosphate dehydrogenase family.

It localises to the cytoplasm. It carries out the reaction sn-glycerol 3-phosphate + NAD(+) = dihydroxyacetone phosphate + NADH + H(+). It catalyses the reaction sn-glycerol 3-phosphate + NADP(+) = dihydroxyacetone phosphate + NADPH + H(+). The protein operates within membrane lipid metabolism; glycerophospholipid metabolism. Functionally, catalyzes the reduction of the glycolytic intermediate dihydroxyacetone phosphate (DHAP) to sn-glycerol 3-phosphate (G3P), the key precursor for phospholipid synthesis. This is Glycerol-3-phosphate dehydrogenase [NAD(P)+] 1 from Salinibacter ruber (strain DSM 13855 / M31).